A 398-amino-acid polypeptide reads, in one-letter code: Acetate kinase 1 (398 aa).

Asn-10 serves as a coordination point for Mg(2+). Lys-17 serves as a coordination point for ATP. Arg-89 serves as a coordination point for substrate. Asp-146 serves as the catalytic Proton donor/acceptor. ATP-binding positions include 206–210 (HLGNG), 281–283 (DCR), and 329–333 (GIGEN). Glu-384 is a Mg(2+) binding site.

This sequence belongs to the acetokinase family. Homodimer. It depends on Mg(2+) as a cofactor. The cofactor is Mn(2+).

It is found in the cytoplasm. The catalysed reaction is acetate + ATP = acetyl phosphate + ADP. It functions in the pathway metabolic intermediate biosynthesis; acetyl-CoA biosynthesis; acetyl-CoA from acetate: step 1/2. Its function is as follows. Catalyzes the formation of acetyl phosphate from acetate and ATP. Can also catalyze the reverse reaction. This chain is Acetate kinase 1, found in Neisseria meningitidis serogroup B (strain ATCC BAA-335 / MC58).